Consider the following 461-residue polypeptide: Ornithine decarboxylase (461 aa).

Position 69 is an N6-(pyridoxal phosphate)lysine (K69). Pyridoxal 5'-phosphate contacts are provided by residues S200, G237, and 274–277 (EPGR). S303 is modified (phosphoserine; by CK2). 331-332 (YD) contributes to the substrate binding site. The active-site Proton donor; shared with dimeric partner is the C360. C360 carries the post-translational modification S-nitrosocysteine. D361 provides a ligand contact to substrate. Y389 contacts pyridoxal 5'-phosphate.

It belongs to the Orn/Lys/Arg decarboxylase class-II family. In terms of assembly, homodimer. Only the dimer is catalytically active, as the active sites are constructed of residues from both monomers. Pyridoxal 5'-phosphate is required as a cofactor.

It catalyses the reaction L-ornithine + H(+) = putrescine + CO2. It participates in amine and polyamine biosynthesis; putrescine biosynthesis via L-ornithine pathway; putrescine from L-ornithine: step 1/1. Its activity is regulated as follows. Inhibited by antizymes (AZs) OAZ1, OAZ2 and OAZ3 in response to polyamine levels. AZs inhibit the assembly of the functional homodimer by binding to ODC monomers. Additionally, OAZ1 targets ODC monomers for ubiquitin-independent proteolytic destruction by the 26S proteasome. Catalyzes the first and rate-limiting step of polyamine biosynthesis that converts ornithine into putrescine, which is the precursor for the polyamines, spermidine and spermine. Polyamines are essential for cell proliferation and are implicated in cellular processes, ranging from DNA replication to apoptosis. The sequence is that of Ornithine decarboxylase (Odc1) from Mus pahari (Gairdner's shrew-mouse).